A 385-amino-acid polypeptide reads, in one-letter code: Lipid-A-disaccharide synthase (385 aa).

Belongs to the LpxB family.

It catalyses the reaction a lipid X + a UDP-2-N,3-O-bis[(3R)-3-hydroxyacyl]-alpha-D-glucosamine = a lipid A disaccharide + UDP + H(+). It functions in the pathway bacterial outer membrane biogenesis; LPS lipid A biosynthesis. Condensation of UDP-2,3-diacylglucosamine and 2,3-diacylglucosamine-1-phosphate to form lipid A disaccharide, a precursor of lipid A, a phosphorylated glycolipid that anchors the lipopolysaccharide to the outer membrane of the cell. The chain is Lipid-A-disaccharide synthase from Pseudoalteromonas translucida (strain TAC 125).